The following is a 925-amino-acid chain: Neuropilin-2 (925 aa).

The signal sequence occupies residues 1 to 22 (MDMFPLTWIFLALYFSGHKVRS). The Extracellular segment spans residues 23-858 (QQDPPCGGRL…EKSWLYTLDP (836 aa)). 3 disulfide bridges follow: Cys28–Cys55, Cys83–Cys105, and Cys149–Cys175. CUB domains are found at residues 28 to 142 (CGGR…YEIF) and 149 to 267 (CSKN…YYLV). N-linked (GlcNAc...) asparagine glycosylation is found at Asn152 and Asn157. Glu197, Asp211, and Asp252 together coordinate Ca(2+). Residues Cys208 and Cys230 are joined by a disulfide bond. Disulfide bonds link Cys277-Cys427 and Cys434-Cys592. F5/8 type C domains follow at residues 277–427 (CNAP…LFGC) and 434–592 (CSNM…VLGC). Over residues 297-310 (STFSDGRWTPQQSR) the composition is skewed to polar residues. Residues 297–317 (STFSDGRWTPQQSRLHGDDNG) form a disordered region. The disordered stretch occupies residues 601 to 621 (VETLGPTVKSEETTTPYPMDE). Asn629 is a glycosylation site (N-linked (GlcNAc...) asparagine). The MAM domain occupies 642-802 (SGFNCNFDFP…TDVPLENCME (161 aa)). The span at 820–830 (YEDEIDDDYEG) shows a compositional bias: acidic residues. Residues 820-849 (YEDEIDDDYEGDWNNSSSTSGAGSPSSGKE) are disordered. 2 N-linked (GlcNAc...) asparagine glycosylation sites follow: Asn833 and Asn834. A compositionally biased stretch (low complexity) spans 835 to 846 (SSSTSGAGSPSS). A helical membrane pass occupies residues 859 to 883 (ILITIIAMSSLGVLLGATCAGLLLY). Topologically, residues 884 to 925 (CTCSYSGLSSRSCTTLENYNFELYDGLKHKVKINHQKCCSEA) are cytoplasmic.

It belongs to the neuropilin family. Heterodimer with NRP1. Binds PLXNB1. In terms of tissue distribution, found in certain neuronal populations of the CNS, including dorsal root ganglia, and in other non-neuronal tissues including mesenchymal tissue lining in the ribs.

Its subcellular location is the membrane. High affinity receptor for semaphorins 3C, 3F, VEGF-165 and VEGF-145 isoforms of VEGF, and the PLGF-2 isoform of PGF. The protein is Neuropilin-2 (Nrp2) of Rattus norvegicus (Rat).